The following is a 355-amino-acid chain: Heat-inducible transcription repressor HrcA (355 aa).

The protein belongs to the HrcA family.

In terms of biological role, negative regulator of class I heat shock genes (grpE-dnaK-dnaJ and groELS operons). Prevents heat-shock induction of these operons. The sequence is that of Heat-inducible transcription repressor HrcA from Nitratidesulfovibrio vulgaris (strain DSM 19637 / Miyazaki F) (Desulfovibrio vulgaris).